The sequence spans 161 residues: NADH-quinone oxidoreductase subunit C (161 aa).

This sequence belongs to the complex I 30 kDa subunit family. As to quaternary structure, NDH-1 is composed of 14 different subunits. Subunits NuoB, C, D, E, F, and G constitute the peripheral sector of the complex.

It localises to the cell inner membrane. The enzyme catalyses a quinone + NADH + 5 H(+)(in) = a quinol + NAD(+) + 4 H(+)(out). Functionally, NDH-1 shuttles electrons from NADH, via FMN and iron-sulfur (Fe-S) centers, to quinones in the respiratory chain. The immediate electron acceptor for the enzyme in this species is believed to be ubiquinone. Couples the redox reaction to proton translocation (for every two electrons transferred, four hydrogen ions are translocated across the cytoplasmic membrane), and thus conserves the redox energy in a proton gradient. In Citrifermentans bemidjiense (strain ATCC BAA-1014 / DSM 16622 / JCM 12645 / Bem) (Geobacter bemidjiensis), this protein is NADH-quinone oxidoreductase subunit C.